The sequence spans 713 residues: Catalase-peroxidase (713 aa).

The segment at residues 77-200 (WHSAGTYRTT…LGATVMGLIY (124 aa)) is a cross-link (tryptophyl-tyrosyl-methioninium (Trp-Tyr) (with M-226)). Residue His-78 is the Proton acceptor of the active site. The segment at residues 200 to 226 (YVNPEGPDGEPDLEGSAANIRESFGRM) is a cross-link (tryptophyl-tyrosyl-methioninium (Tyr-Met) (with W-77)). His-241 serves as a coordination point for heme b.

It belongs to the peroxidase family. Peroxidase/catalase subfamily. As to quaternary structure, homodimer or homotetramer. Heme b serves as cofactor. In terms of processing, formation of the three residue Trp-Tyr-Met cross-link is important for the catalase, but not the peroxidase activity of the enzyme.

The enzyme catalyses H2O2 + AH2 = A + 2 H2O. It catalyses the reaction 2 H2O2 = O2 + 2 H2O. Bifunctional enzyme with both catalase and broad-spectrum peroxidase activity. This Natronomonas pharaonis (strain ATCC 35678 / DSM 2160 / CIP 103997 / JCM 8858 / NBRC 14720 / NCIMB 2260 / Gabara) (Halobacterium pharaonis) protein is Catalase-peroxidase.